The primary structure comprises 75 residues: Small ribosomal subunit protein bS18 (75 aa).

It belongs to the bacterial ribosomal protein bS18 family. In terms of assembly, part of the 30S ribosomal subunit. Forms a tight heterodimer with protein bS6.

Its function is as follows. Binds as a heterodimer with protein bS6 to the central domain of the 16S rRNA, where it helps stabilize the platform of the 30S subunit. This Buchnera aphidicola subsp. Cinara cedri (strain Cc) protein is Small ribosomal subunit protein bS18.